The sequence spans 504 residues: Cytochrome P450 7A1 (504 aa).

The chain crosses the membrane as a helical span at residues 4–24; that stretch reads TSLIWGIAIAACCCLWLILGI. Heme is bound at residue Cys444.

It belongs to the cytochrome P450 family. Heme serves as cofactor. Detected in liver.

It is found in the endoplasmic reticulum membrane. Its subcellular location is the microsome membrane. It catalyses the reaction cholesterol + reduced [NADPH--hemoprotein reductase] + O2 = 7alpha-hydroxycholesterol + oxidized [NADPH--hemoprotein reductase] + H2O + H(+). The catalysed reaction is 4beta-hydroxycholesterol + reduced [NADPH--hemoprotein reductase] + O2 = 4beta,7alpha-dihydroxycholesterol + oxidized [NADPH--hemoprotein reductase] + H2O + H(+). It carries out the reaction lathosterol + reduced [NADPH--hemoprotein reductase] + O2 = 7alpha,8alpha-epoxy-5alpha-cholestan-3beta-ol + oxidized [NADPH--hemoprotein reductase] + H2O + H(+). The enzyme catalyses lathosterol + reduced [NADPH--hemoprotein reductase] + O2 = 5alpha-cholestan-7-oxo-3beta-ol + oxidized [NADPH--hemoprotein reductase] + H2O + H(+). It catalyses the reaction 7-dehydrocholesterol + reduced [NADPH--hemoprotein reductase] + O2 = 7-oxocholesterol + oxidized [NADPH--hemoprotein reductase] + H2O + H(+). The catalysed reaction is (24S)-hydroxycholesterol + reduced [NADPH--hemoprotein reductase] + O2 = (24S)-7alpha-dihydroxycholesterol + oxidized [NADPH--hemoprotein reductase] + H2O + H(+). It carries out the reaction (24R)-hydroxycholesterol + reduced [NADPH--hemoprotein reductase] + O2 = (24R)-7alpha-dihydroxycholesterol + oxidized [NADPH--hemoprotein reductase] + H2O + H(+). The protein operates within lipid metabolism; bile acid biosynthesis. Its pathway is steroid metabolism; cholesterol degradation. In terms of biological role, a cytochrome P450 monooxygenase involved in the metabolism of endogenous cholesterol and its oxygenated derivatives (oxysterols). Mechanistically, uses molecular oxygen inserting one oxygen atom into a substrate, and reducing the second into a water molecule, with two electrons provided by NADPH via cytochrome P450 reductase (CPR; NADPH-ferrihemoprotein reductase). Functions as a critical regulatory enzyme of bile acid biosynthesis and cholesterol homeostasis. Catalyzes the hydroxylation of carbon hydrogen bond at 7-alpha position of cholesterol, a rate-limiting step in cholesterol catabolism and bile acid biosynthesis. 7-alpha hydroxylates several oxysterols, including 4beta-hydroxycholesterol and 24-hydroxycholesterol. Catalyzes the oxidation of the 7,8 double bond of 7-dehydrocholesterol and lathosterol with direct and predominant formation of the 7-keto derivatives. This chain is Cytochrome P450 7A1, found in Homo sapiens (Human).